The chain runs to 209 residues: MLDESPMRKGDSVSNDQSNPESNASVSIHQQNQIITCVSPGPVCPNAIEIKRDIVIVRLRPVESCPGYRFFRRVFETLEKWQLQVDMFSTSLGRITLALGAAALQAGISDSCSARNDMMSRDLMHGMQKLLPDDHIELFPHMAIISVVGHPSRRMAGHIFATMDANDIPTVMISHDAARLGIACAISEQYTAKALCVFEQCLFRYSLTH.

Positions 1–11 (MLDESPMRKGD) are enriched in basic and acidic residues. A disordered region spans residues 1-27 (MLDESPMRKGDSVSNDQSNPESNASVS). Over residues 12–27 (SVSNDQSNPESNASVS) the composition is skewed to polar residues.

Belongs to the aspartokinase family.

It functions in the pathway alkaloid biosynthesis. Functionally, aspartokinase-like protein; part of the gene cluster that mediates the biosynthesis of loline alkaloids, potent insecticidal agents composed of a pyrrolizidine ring system and an uncommon ether bridge linking carbons 2 and 7. Lolines are structurally differentiated by the various modifications of the L-amino group and include norloline, loline, N-methylloline, N-acetylloline, N-acetylnorloline, and N-formylloline. The first committed step is the condensation of O-acetyl-L-homoserine (derived from L-aspartic acid) and L-proline, probably catalyzed by the gamma-type pyridoxal 5'-phosphate(PLP)-dependent enzyme lolC, to give the diamino diacid, NACPP. Ensuing cyclization, decarboxylation, and acetylation steps yield 1-exo-acetamidopyrrolizidine (AcAP). LolO is required for installation of the ether bridge upon the pathway intermediate, 1-exo-acetamidopyrrolizidine (AcAP). In sequential 2-oxoglutarate- and O(2)-consuming steps, lolO removes hydrogens from C2 and C7 of AcAP to form both carbon-oxygen bonds in N-acetylnorloline (NANL), the precursor to all other lolines. The enzymes lolD, lolE, lolF and lolT have also been proposed to be involved in the ether-bridge installation. Further processing of the exocyclic moiety of NANL by fungal N-acetamidase (LolN), methyltransferase (LolM), and cytochrome P450 (LolP) enzymes, with occasional involvement of a plant acetyltransferase, generates the other known lolines. LolN transforms NANL to norlonine which is monomethylated and dimethylated to respectively lonine and N-methyllonine (NML) by lolM. LolP catalyzes hydroxylation of the methyl group in N-methylloline (NML) and further oxygenation to N-formylloline (NFL). A plant acetyltransferase is responsible for the acetylation of loline to form N-acetylloline (NAL). LolA might interact with aspartate kinase to prevent feedback inhibition of its activity by these end products and thereby promote production of L-homoserine from L-aspartate. The protein is Aspartate kinase-like protein lolA1 of Epichloe uncinata (Endophyte fungus).